The sequence spans 219 residues: Thiopurine S-methyltransferase (219 aa).

4 residues coordinate S-adenosyl-L-methionine: Trp-10, Leu-45, Glu-66, and Arg-130.

This sequence belongs to the class I-like SAM-binding methyltransferase superfamily. TPMT family.

Its subcellular location is the cytoplasm. It carries out the reaction S-adenosyl-L-methionine + a thiopurine = S-adenosyl-L-homocysteine + a thiopurine S-methylether.. The chain is Thiopurine S-methyltransferase from Psychrobacter cryohalolentis (strain ATCC BAA-1226 / DSM 17306 / VKM B-2378 / K5).